A 145-amino-acid polypeptide reads, in one-letter code: Basic phospholipase A2 S11-61 (145 aa).

The signal sequence occupies residues 1-19 (MYPVHLLVLLAVCVSLLGA). A propeptide spanning residues 20 to 27 (SNIPPQPL) is cleaved from the precursor. Disulfide bonds link C38-C98, C54-C144, C56-C72, C71-C125, C78-C118, C87-C111, and C105-C116. Residues Y55, G57, and G59 each contribute to the Ca(2+) site. H75 is an active-site residue. D76 lines the Ca(2+) pocket. D119 is an active-site residue.

Belongs to the phospholipase A2 family. Group I subfamily. D49 sub-subfamily. The cofactor is Ca(2+). Expressed by the venom gland.

It localises to the secreted. The enzyme catalyses a 1,2-diacyl-sn-glycero-3-phosphocholine + H2O = a 1-acyl-sn-glycero-3-phosphocholine + a fatty acid + H(+). In terms of biological role, snake venom phospholipase A2 (PLA2) that inhibits collagen-induced platelet aggregation. PLA2 catalyzes the calcium-dependent hydrolysis of the 2-acyl groups in 3-sn-phosphoglycerides. The polypeptide is Basic phospholipase A2 S11-61 (Austrelaps superbus (Lowland copperhead snake)).